Here is a 436-residue protein sequence, read N- to C-terminus: Testican-3 (436 aa).

The N-terminal stretch at 1-22 is a signal peptide; the sequence is MLKVSALLCVCAAAWCSQTLAA. Cystine bridges form between Cys-90–Cys-101, Cys-95–Cys-111, Cys-139–Cys-169, Cys-142–Cys-162, Cys-151–Cys-183, Cys-317–Cys-341, Cys-352–Cys-359, and Cys-361–Cys-380. The 53-residue stretch at 133–185 folds into the Kazal-like domain; sequence GLPSSTCKPCPIAYASPVCGSDGHSYSSQCKLEYQACVLGKQISIKCEGRCPC. The region spanning 314–380 is the Thyroglobulin type-1 domain; the sequence is DPPCHTELSN…GSRINGVADC (67 aa). 2 O-linked (Xyl...) (glycosaminoglycan) serine glycosylation sites follow: Ser-387 and Ser-392. Positions 393 to 436 are disordered; that stretch reads GDFREWTDDEGEEDDIMNDKDDIEDDDEDEGDDDDDGDVHDGYI. Positions 399–430 are enriched in acidic residues; it reads TDDEGEEDDIMNDKDDIEDDDEDEGDDDDDGD.

In terms of processing, contains chondroitin sulfate and heparan sulfate O-linked oligosaccharides. Expressed in brain.

It is found in the secreted. The protein resides in the extracellular space. The protein localises to the extracellular matrix. In terms of biological role, may participate in diverse steps of neurogenesis. Inhibits the processing of pro-matrix metalloproteinase 2 (MMP-2) by MT1-MMP and MT3-MMP. May interfere with tumor invasion. The polypeptide is Testican-3 (Spock3) (Mus musculus (Mouse)).